The sequence spans 89 residues: UPF0223 protein BAMEG_4214 (89 aa).

The protein belongs to the UPF0223 family.

The protein is UPF0223 protein BAMEG_4214 of Bacillus anthracis (strain CDC 684 / NRRL 3495).